The chain runs to 298 residues: Ribosomal protein L11 methyltransferase (298 aa).

S-adenosyl-L-methionine is bound by residues Thr-150, Gly-171, Asp-193, and Asn-232.

It belongs to the methyltransferase superfamily. PrmA family.

It localises to the cytoplasm. The enzyme catalyses L-lysyl-[protein] + 3 S-adenosyl-L-methionine = N(6),N(6),N(6)-trimethyl-L-lysyl-[protein] + 3 S-adenosyl-L-homocysteine + 3 H(+). In terms of biological role, methylates ribosomal protein L11. The polypeptide is Ribosomal protein L11 methyltransferase (Chromobacterium violaceum (strain ATCC 12472 / DSM 30191 / JCM 1249 / CCUG 213 / NBRC 12614 / NCIMB 9131 / NCTC 9757 / MK)).